Consider the following 250-residue polypeptide: Putative HTH-type transcriptional regulatory protein PAE1627 (250 aa).

The HTH cro/C1-type domain maps to 129–183 (LRAKRQQAGLSLGTLATNLGVTRETVYRYERGEIEAPLKIAEKLINMFGEDITKK). Residues 140 to 159 (LGTLATNLGVTRETVYRYER) constitute a DNA-binding region (H-T-H motif).

In Pyrobaculum aerophilum (strain ATCC 51768 / DSM 7523 / JCM 9630 / CIP 104966 / NBRC 100827 / IM2), this protein is Putative HTH-type transcriptional regulatory protein PAE1627.